We begin with the raw amino-acid sequence, 398 residues long: Small ribosomal subunit protein mS78 (rPPR3a) (398 aa).

Residues 1-19 constitute a mitochondrion transit peptide; sequence MSSLSRVLRGTFNTCPIRR. PPR repeat units lie at residues 108–142, 143–173, 179–213, 214–248, 249–283, 284–318, and 319–353; these read KEGF…DCKR, SVLS…LPGK, DIVS…GLKP, DIVT…NVAI, DIRT…GLKP, DVFS…GYRP, and DKAT…RYLV.

The protein belongs to the PPR family. P subfamily. In terms of assembly, component of the mitochondrial ribosome small subunit.

It localises to the mitochondrion. This Arabidopsis thaliana (Mouse-ear cress) protein is Small ribosomal subunit protein mS78 (rPPR3a).